Consider the following 255-residue polypeptide: Methylthioribulose-1-phosphate dehydratase (255 aa).

Residue Cys-111 coordinates substrate. Positions 128 and 130 each coordinate Zn(2+). Glu-157 functions as the Proton donor/acceptor in the catalytic mechanism. His-213 is a Zn(2+) binding site.

This sequence belongs to the aldolase class II family. MtnB subfamily. The cofactor is Zn(2+).

The protein localises to the cytoplasm. It catalyses the reaction 5-(methylsulfanyl)-D-ribulose 1-phosphate = 5-methylsulfanyl-2,3-dioxopentyl phosphate + H2O. Its pathway is amino-acid biosynthesis; L-methionine biosynthesis via salvage pathway; L-methionine from S-methyl-5-thio-alpha-D-ribose 1-phosphate: step 2/6. In terms of biological role, catalyzes the dehydration of methylthioribulose-1-phosphate (MTRu-1-P) into 2,3-diketo-5-methylthiopentyl-1-phosphate (DK-MTP-1-P). This chain is Methylthioribulose-1-phosphate dehydratase, found in Talaromyces stipitatus (strain ATCC 10500 / CBS 375.48 / QM 6759 / NRRL 1006) (Penicillium stipitatum).